Reading from the N-terminus, the 225-residue chain is MNGIRDVVREEQPRERLLLEGAGSLSNRELLAVLLRTGSKEETVLTLSDNILHHFDGLRMLKDATLEEMMSIHGVGIAKASQLMAAFELGRRMVRLEYQNRYSIRSPEDCASYMMEEMRFLQQEHFVCLYLNTKNQVIHRQTIFIGSLNTSIVHPREVFKEAFRRAAASIICLHNHPSGDPAPSREDIEVTKRLVECGRIIGIEVLDHIIIGDHKFVSLKEKGHI.

The region spanning serine 103–isoleucine 225 is the MPN domain. Residues histidine 174, histidine 176, and aspartate 187 each coordinate Zn(2+). The JAMM motif signature appears at histidine 174–aspartate 187.

It belongs to the UPF0758 family.

This Bacillus mycoides (strain KBAB4) (Bacillus weihenstephanensis) protein is UPF0758 protein BcerKBAB4_4299.